Reading from the N-terminus, the 300-residue chain is Cation-efflux pump FieF (300 aa).

6 consecutive transmembrane segments (helical) span residues A12 to W32, I39 to V59, A82 to I102, P114 to F134, M151 to S171, and W172 to Y192. Residues D45 and D49 each coordinate Zn(2+). H153 and D157 together coordinate Zn(2+).

Belongs to the cation diffusion facilitator (CDF) transporter (TC 2.A.4) family. FieF subfamily. In terms of assembly, homodimer.

Its subcellular location is the cell inner membrane. The catalysed reaction is Zn(2+)(in) + H(+)(out) = Zn(2+)(out) + H(+)(in). It carries out the reaction Cd(2+)(in) + H(+)(out) = Cd(2+)(out) + H(+)(in). It catalyses the reaction Fe(2+)(in) + H(+)(out) = Fe(2+)(out) + H(+)(in). In terms of biological role, divalent metal cation transporter which exports Zn(2+), Cd(2+) and possibly Fe(2+). May be involved in zinc and iron detoxification by efflux. The sequence is that of Cation-efflux pump FieF from Escherichia fergusonii (strain ATCC 35469 / DSM 13698 / CCUG 18766 / IAM 14443 / JCM 21226 / LMG 7866 / NBRC 102419 / NCTC 12128 / CDC 0568-73).